Reading from the N-terminus, the 94-residue chain is Acylphosphatase (94 aa).

The region spanning 6-92 is the Acylphosphatase-like domain; sequence RVHVWIRGRV…EGLPTFEIRP (87 aa). Active-site residues include Arg-21 and Asn-39.

Belongs to the acylphosphatase family.

It catalyses the reaction an acyl phosphate + H2O = a carboxylate + phosphate + H(+). The polypeptide is Acylphosphatase (acyP) (Synechococcus sp. (strain JA-2-3B'a(2-13)) (Cyanobacteria bacterium Yellowstone B-Prime)).